The following is a 220-amino-acid chain: Deoxyribose-phosphate aldolase (220 aa).

Asp89 functions as the Proton donor/acceptor in the catalytic mechanism. Lys151 (schiff-base intermediate with acetaldehyde) is an active-site residue. Lys180 (proton donor/acceptor) is an active-site residue.

It belongs to the DeoC/FbaB aldolase family. DeoC type 1 subfamily.

Its subcellular location is the cytoplasm. It catalyses the reaction 2-deoxy-D-ribose 5-phosphate = D-glyceraldehyde 3-phosphate + acetaldehyde. It participates in carbohydrate degradation; 2-deoxy-D-ribose 1-phosphate degradation; D-glyceraldehyde 3-phosphate and acetaldehyde from 2-deoxy-alpha-D-ribose 1-phosphate: step 2/2. Catalyzes a reversible aldol reaction between acetaldehyde and D-glyceraldehyde 3-phosphate to generate 2-deoxy-D-ribose 5-phosphate. This is Deoxyribose-phosphate aldolase from Streptococcus pneumoniae (strain Hungary19A-6).